Here is a 947-residue protein sequence, read N- to C-terminus: Netrin receptor unc-5 (947 aa).

The Ig-like domain maps to 43–141 (VIRNKPLRLQ…VHLAYMRKHF (99 aa)). 5 cysteine pairs are disulfide-bonded: Cys-53–Cys-112, Cys-160–Cys-209, Cys-243–Cys-295, Cys-247–Cys-299, and Cys-273–Cys-285. The Ig-like C2-type domain occupies 139 to 226 (KHFLKSPVAQ…SRKTDPVEVQ (88 aa)). An N-linked (GlcNAc...) asparagine glycan is attached at Asn-206. TSP type-1 domains are found at residues 230–300 (DGGW…VPCK) and 302–354 (DGGW…QLCT). 2 C-linked (Man) tryptophan glycosylation sites follow: Trp-305 and Trp-308. A helical transmembrane segment spans residues 369 to 389 (GSVASIFIVASFILAILAMFC). Topologically, residues 390-947 (CKRGNSKKSK…LSAFPQIVSP (558 aa)) are cytoplasmic. A Phosphotyrosine modification is found at Tyr-510. One can recognise a ZU5 domain in the interval 530 to 658 (NIVAAQIDSN…LNTNMFVQFE (129 aa)). The Death domain maps to 857–938 (ELARLLDMPN…DAVMVLERFL (82 aa)).

The protein belongs to the unc-5 family. Interacts (via cytoplasmic domain) with src-1 (via SH2 domain and SH3 domain). Interacts with madd-4. Interacts with unc-129; the interaction is direct. In terms of processing, phosphorylated on different cytoplasmic tyrosine residues. May be phosphorylated on tyrosine residues by src-1. Tyrosine phosphorylation is unc-6-dependent. Post-translationally, glycosylated via C-mannosylation by dpy-19 at Trp-305 and Trp-308. Expressed in cell bodies and axons of the VNC motor neurons that extend axons to the dorsal midline and within the ventral nerve cord. Expressed in gonadal distal tip cells (DTC).

It is found in the cell membrane. It localises to the membrane raft. Its subcellular location is the cell projection. The protein resides in the neuron projection. Receptor for netrin (unc-6) required for axon guidance. Mediates axon repulsion of neuronal growth cones in the developing nervous system upon ligand binding. Axon migration is mediated by the secreted unc-6, which promotes attraction of neurons and axons through binding to the unc-40 receptor, while repulsion requires both unc-5 and unc-40 receptors. Involved in the ventral-dorsal and anterior-posterior migration of distal tip cells along the body, which may be mediated by Wnt receptor mom-5, ced-10/Rac, ced-12/ELMO and mig-2/RhoG. The polypeptide is Netrin receptor unc-5 (Caenorhabditis elegans).